Reading from the N-terminus, the 391-residue chain is MKIIGKIGKGKVEVNEKTKFSILLNNVAKKADIAEGKRAVEDIIRVIYRHQPISTKKIAQKTRLPLPIVAKVRTILEREKILKRTERGAELTDLGKEFAENFLKLKYKKSLTCKTCNGRGIVLDEFFEDILNKVRVWAKRRPLVDTTIDQSFATPETSTYRAALMYERGDLEGKRILFVGDDDLTSLPTALTNMAEEIAVVDIDERILKLIEKFSQKEGVKIKTIKHDLRNPLPQDLKERFDVISTDPPYTVDGLKLFLSRGIEALGKEGIAYLSYSHKPIDEWLSIQKAITNMGFVISELIPNFNYYEGSEIIANTTFIARLVGKNLKINIGDTEKIYTGLVKPVIRYYKCLKCGKIHKVGEEVKKVEDLVCECGGKKFKMIKREKLKNE.

This is an uncharacterized protein from Methanocaldococcus jannaschii (strain ATCC 43067 / DSM 2661 / JAL-1 / JCM 10045 / NBRC 100440) (Methanococcus jannaschii).